A 689-amino-acid polypeptide reads, in one-letter code: Glycine--tRNA ligase beta subunit (689 aa).

It belongs to the class-II aminoacyl-tRNA synthetase family. As to quaternary structure, tetramer of two alpha and two beta subunits.

Its subcellular location is the cytoplasm. It catalyses the reaction tRNA(Gly) + glycine + ATP = glycyl-tRNA(Gly) + AMP + diphosphate. This chain is Glycine--tRNA ligase beta subunit, found in Shewanella piezotolerans (strain WP3 / JCM 13877).